The sequence spans 260 residues: Apolipoprotein A-I (260 aa).

An N-terminal signal peptide occupies residues 1–18 (MKFAALALALLLAVGSHA). The interval 32–63 (ARAVLDVYLTQVKDMSLRAVNQLDDPQYAEFK) is 3 X approximate tandem repeats. 2 tandem repeats follow at residues 64-85 (TNLAQRIEEMYTQIKTLQGSVS) and 87-107 (MTDSFYNTVMEVTKDTRESLN). The segment at 64 to 260 (TNLAQRIEEM…EIIAASVTKS (197 aa)) is 10 X approximate tandem repeats. A 3; half-length repeat occupies 108 to 118 (VDLEALKSSLA). 5 tandem repeats follow at residues 119–140 (PQNEQLKQVIEKHLNDYRTLLT), 141–162 (PIYNDYKTKHDEEMAALKTRLE), 163–184 (PVMEELRTKIQANVEETKAVLM), 185–206 (PMVETVRTKVTERLESLREVVQ), and 207–225 (PYVQEYKEQMKQMYDQAQT). The stretch at 226–236 (VDTDALRTKIT) is one 9; half-length repeat. Repeat unit 10 spans residues 237 to 260 (PLVEEIKVKMNAIFEIIAASVTKS).

Belongs to the apolipoprotein A1/A4/E family. As to expression, strong expression in liver with lower expression in intestine.

It is found in the secreted. Its function is as follows. Participates in the reverse transport of cholesterol from tissues to the liver for excretion by promoting cholesterol efflux from tissues and by acting as a cofactor for the lecithin cholesterol acyltransferase (LCAT). This is Apolipoprotein A-I (apoa1) from Sparus aurata (Gilthead sea bream).